The chain runs to 153 residues: Putative trans-acting regulator pXO2-62/BXB0076/GBAA_pXO2_0076 (153 aa).

Belongs to the AtxA/AcpA family.

The sequence is that of Putative trans-acting regulator pXO2-62/BXB0076/GBAA_pXO2_0076 from Bacillus anthracis.